Consider the following 1034-residue polypeptide: Platelet endothelial aggregation receptor 1 (1034 aa).

An N-terminal signal peptide occupies residues 1-18 (MPLCPLLLLALGLRLTGT). The Extracellular portion of the chain corresponds to 19–754 (LNSNDPNVCT…PTSPVTHNSL (736 aa)). The EMI domain maps to 23–101 (DPNVCTFWES…YYESRGACVP (79 aa)). Disulfide bonds link Cys-27–Cys-89, Cys-53–Cys-63, and Cys-88–Cys-99. N-linked (GlcNAc...) asparagine glycosylation occurs at Asn-150. EGF-like domains are found at residues 181–215 (YGPACQFDCQCYGASCDPQDGACFCPPGRAGPSCN), 223–258 (DGFFCPRTYPCQNGGVPQGSQGSCSCPPGWMGVICS), 266–301 (HGPNCTQECRCHNGGLCDRFTGQCHCAPGYIGDRCQ), 309–344 (FGQDCAETCDCAPGARCFPANGACLCEHGFTGDRCT), and 398–433 (HGPGCQEHCLCLHGGLCLADSGLCRCAPGYTGPHCA). Disulfide bonds link Cys-185/Cys-196, Cys-189/Cys-203, Cys-205/Cys-214, Cys-233/Cys-246, and Cys-248/Cys-257. A glycan (N-linked (GlcNAc...) asparagine) is linked at Asn-269. Cystine bridges form between Cys-270–Cys-282, Cys-276–Cys-289, Cys-291–Cys-300, Cys-313–Cys-325, Cys-319–Cys-332, Cys-334–Cys-343, Cys-402–Cys-414, Cys-408–Cys-421, and Cys-423–Cys-432. A glycan (N-linked (GlcNAc...) asparagine) is linked at Asn-474. EGF-like domains are found at residues 484 to 519 (WGFNCNASCQCAHDGVCSPQTGACTCTPGWHGAHCQ), 575 to 605 (SNTCTCKNGGTCVSENGNCVCAPGFRGPSCQ), 613 to 648 (YGKRCVQCKCNNNHSSCHPSDGTCSCLAGWTGPDCS), and 656 to 691 (WGLKCSQLCQCHHGGTCHPQDGSCICTPGWTGPNCL). Intrachain disulfides connect Cys-488–Cys-500, Cys-494–Cys-507, Cys-509–Cys-518, Cys-578–Cys-586, Cys-580–Cys-593, Cys-595–Cys-604, Cys-617–Cys-629, Cys-622–Cys-636, Cys-638–Cys-647, Cys-660–Cys-672, Cys-666–Cys-679, and Cys-681–Cys-690. A helical membrane pass occupies residues 755–775 (GAVIGIAVLGTLVVALIALFI). The Cytoplasmic portion of the chain corresponds to 776 to 1034 (GYRQWQKGKE…PSPPSRRQDR (259 aa)). Positions 823 to 883 (TLSQCSPNPP…PHERGASHLD (61 aa)) are disordered. Basic and acidic residues predominate over residues 851–883 (RPSRAHGRENHVTLPADWKHRREPHERGASHLD). The residue at position 923 (Tyr-923) is a Phosphotyrosine. The interval 925-1034 (TIRDLPSLPG…PSPPSRRQDR (110 aa)) is disordered. Position 951 is a phosphoserine (Ser-951). A compositionally biased stretch (polar residues) spans 972–991 (DSGTYEQPSPLSHNEESLGS). Ser-1026 carries the post-translational modification Phosphoserine.

The protein belongs to the MEGF family. As to quaternary structure, interacts with SHC2 upon its aggregation-induced tyrosine phosphorylation. Interacts (via extracellular domain) with SVEP1. Phosphorylated in the intracellular domain on tyrosine residues. Phosphorylated on tyrosine residues by SRC. Tyrosine phosphorylation is detected upon platelet aggregation stimulated by collagen, TRAP and thrombin and platelet-platelet contacts but not after platelet activation. Tyrosine phosphorylation enhanced its association with SHC1 and SHC2. Phosphorylated in the intracellular domain on tyrosine residues. Phosphorylated when in the presence of SVEP1. As to expression, expressed in thymocytes, bone marrow stromal and osteogenic cells (at protein level). Strongly expressed in kidney and heart. Moderately expressed in lung, spleen, thymus, liver, brain, testis, skin and stomach. Expressed in hematopoietic stem progenitor cells.

The protein resides in the cell membrane. It localises to the cell projection. Its subcellular location is the lamellipodium. Functionally, required for SVEP1-mediated platelet activation, via its interaction with SVEP1 and subsequent activation of AKT/mTOR signaling. May be involved in the early stages of hematopoiesis. This is Platelet endothelial aggregation receptor 1 (Pear1) from Mus musculus (Mouse).